The chain runs to 131 residues: MSTPSGSNPLPMADKLEAKGRIASIKFDYVKNGQPKAGSTHGVSYHNFTEWFDLNHTCDEHILSVKCYYDDGEIQGLVIKTNIRTSAYMGYNIGTTFTLEVKGKKIVGFHGSFDKNLTSLGAYFAPLSPAK.

The 126-residue stretch at 1 to 126 (MSTPSGSNPL…LTSLGAYFAP (126 aa)) folds into the Jacalin-type lectin domain.

The protein belongs to the jacalin lectin family. In terms of tissue distribution, expressed in the vascular and surrounding tissues in cotyledons. Detected in root apical meristems.

This chain is Jacalin-related lectin 15 (JAL15), found in Arabidopsis thaliana (Mouse-ear cress).